Here is a 723-residue protein sequence, read N- to C-terminus: ATP-dependent DNA helicase RRM3 (723 aa).

2 disordered regions span residues 1–31 (MFRS…SGSH) and 61–101 (DLES…DDDP). A Phosphoserine modification is found at S64. Over residues 83–96 (NNSSSLFSQSQGSF) the composition is skewed to low complexity. Residue 254–261 (GSAGTGKS) coordinates ATP. A DNA-binding region spans residues 682–701 (QVYVALSRAVTMDTLQVLNF).

It belongs to the helicase family. As to quaternary structure, interacts with DEF1 and POL30.

It is found in the nucleus. Its subcellular location is the chromosome. It localises to the telomere. The catalysed reaction is Couples ATP hydrolysis with the unwinding of duplex DNA at the replication fork by translocating in the 5'-3' direction. This creates two antiparallel DNA single strands (ssDNA). The leading ssDNA polymer is the template for DNA polymerase III holoenzyme which synthesizes a continuous strand.. It carries out the reaction ATP + H2O = ADP + phosphate + H(+). In terms of biological role, 5' to 3' DNA replicative helicase recruited to paused replisomes to promote fork progression throughout nonhistone protein-DNA complexes, naturally occurring impediments that are encountered in each S phase where replication forks pauses. Needed for normal fork progression through over 1000 discrete sites scattered throughout the genome, like rDNA, tRNA genes, centromeres, active replication origins, or transcriptional silencers. Required for timely replication of the telomere and subtelomeric DNA and for wild-type levels of telomeric silencing. Involved in regulation of Ty1 transposition and protects the genome from instability at nascent sites of retrotransposition. Involved in DNA repair during stalled replication fork, regulation of fragile sites expression and essential for genome stability. Also plays a role in mtDNA replication. Has G-quadruplex (G4) unwinding activity and can suppress G4-induced genome instability when PIF1 levels are low. The polypeptide is ATP-dependent DNA helicase RRM3 (Saccharomyces cerevisiae (strain ATCC 204508 / S288c) (Baker's yeast)).